The chain runs to 593 residues: NADH-quinone oxidoreductase subunit C/D (593 aa).

The tract at residues 1 to 184 (MTADSALYIP…DPYSLSAAKQ (184 aa)) is NADH dehydrogenase I subunit C. Positions 208–593 (DYMFLNLGPN…IDFVMADVDR (386 aa)) are NADH dehydrogenase I subunit D.

This sequence in the N-terminal section; belongs to the complex I 30 kDa subunit family. The protein in the C-terminal section; belongs to the complex I 49 kDa subunit family. As to quaternary structure, NDH-1 is composed of 13 different subunits. Subunits NuoB, CD, E, F, and G constitute the peripheral sector of the complex.

The protein resides in the cell inner membrane. The enzyme catalyses a quinone + NADH + 5 H(+)(in) = a quinol + NAD(+) + 4 H(+)(out). Functionally, NDH-1 shuttles electrons from NADH, via FMN and iron-sulfur (Fe-S) centers, to quinones in the respiratory chain. The immediate electron acceptor for the enzyme in this species is believed to be ubiquinone. Couples the redox reaction to proton translocation (for every two electrons transferred, four hydrogen ions are translocated across the cytoplasmic membrane), and thus conserves the redox energy in a proton gradient. The protein is NADH-quinone oxidoreductase subunit C/D of Pseudomonas paraeruginosa (strain DSM 24068 / PA7) (Pseudomonas aeruginosa (strain PA7)).